Reading from the N-terminus, the 466-residue chain is GTPase Der (466 aa).

EngA-type G domains are found at residues 30 to 193 and 203 to 376; these read PVVA…PEVS and RRVA…ASWD. Residues 36 to 43, 83 to 87, 145 to 148, 209 to 216, 256 to 260, and 321 to 324 contribute to the GTP site; these read GRPNVGKS, DTGGW, NKVD, GKPNVGKS, DTAGL, and NKWD. Residues 377–459 form the KH-like domain; that stretch reads TRIATGPLNS…PIRINVRVRE (83 aa).

Belongs to the TRAFAC class TrmE-Era-EngA-EngB-Septin-like GTPase superfamily. EngA (Der) GTPase family. As to quaternary structure, associates with the 50S ribosomal subunit.

Functionally, GTPase that plays an essential role in the late steps of ribosome biogenesis. The polypeptide is GTPase Der (Mycolicibacterium paratuberculosis (strain ATCC BAA-968 / K-10) (Mycobacterium paratuberculosis)).